Here is a 745-residue protein sequence, read N- to C-terminus: MAWWWGRWRRRWPRRRWRRRRRVWPRRSRFAVRRRRRGRYVSKRRRFRRRRRRRGRPRYRGRRKKRQTLVIRQWQPDVVRFCKINGWLPLIVCGSGSTQNNFIVHSEDITPRGAPYGGNLTHITWCLEAIYQEFLMHRNRWTRSNHDLDLMRYVGVRFKAYRHPTTDYIISYSKTSPFQVTELSYLSCHPLLMLLSKHHIVVKSLQTKPRGKPYVKFFCKPPKLMLNKWYFTKDFAKVPILMMWATACEPRNPWLGEGTLSPCIGFYALKPSIYTSLSNLPAKVQMFATGTQSDSLTTSSTGFYKTVHPSSITTTSKEWEYTYTGLMEKFFKQATNKPYNWENYGTPADYGSTYTTFSTHRSTRYETIKKEYQKVYPTLTTQTPTNFFLTQEFGFYSPYYLTPSKRDIDWHTPYTYTRYNPLADKGLGNMIWADWCSRDEAAYSPTQSKCMLKDLPLFILFYGYIDWVQKSIGSQTITRDMRLMVICPYTEPQLVDPQDKTKGFVLYGDTFANGNMPVLAPQIPISWFVRWYPNFAHQREVLERVVSCGPFMVRDQEKNSWDITLGYHFLFKWGGSPLPSQAIDDPSQKPTHALPEPGTLPRILQVSDPARLGPKTIFHQWDQRRGLFTKRSIKRMSEYSSDDENFSPGPSKRPALDTRPEGLAGEQRSAYAFLRALQDSQDSEESQEEAPLLEEQAHQKEKEELLLKQPQQQRQHQRVLKRGLRVLFGDVLKLRRGLHIDPLLT.

4 disordered regions span residues 44–64 (RRRF…GRRK), 580–602 (SQAI…TLPR), 638–662 (EYSS…RPEG), and 678–699 (QDSQ…QAHQ). Residues 681–692 (QDSEESQEEAPL) are compositionally biased toward acidic residues.

Belongs to the anelloviridae capsid protein family.

Its subcellular location is the virion. Self assemble to form an icosahedral capsid. This is Capsid protein from Torque teno virus (isolate Human/China/CT23F/2001) (TTV).